The sequence spans 175 residues: Ribosome maturation factor RimM (175 aa).

The 73-residue stretch at 99-171 (AGEYYWFQLK…RILFDLPDGL (73 aa)) folds into the PRC barrel domain.

The protein belongs to the RimM family. As to quaternary structure, binds ribosomal protein uS19.

It localises to the cytoplasm. Functionally, an accessory protein needed during the final step in the assembly of 30S ribosomal subunit, possibly for assembly of the head region. Essential for efficient processing of 16S rRNA. May be needed both before and after RbfA during the maturation of 16S rRNA. It has affinity for free ribosomal 30S subunits but not for 70S ribosomes. The chain is Ribosome maturation factor RimM from Syntrophotalea carbinolica (strain DSM 2380 / NBRC 103641 / GraBd1) (Pelobacter carbinolicus).